Consider the following 419-residue polypeptide: Putative actin-fragmin kinase DDB_G0279609 (419 aa).

Positions 73–94 (INNNNNSINNNNNNNNKNKNKN) are disordered.

Belongs to the protein kinase superfamily. AFK Ser/Thr protein kinase family.

This is Putative actin-fragmin kinase DDB_G0279609 from Dictyostelium discoideum (Social amoeba).